Reading from the N-terminus, the 599-residue chain is Elongation factor 4 (599 aa).

The region spanning 4–186 (KYIRNFSIIA…AIVEKVPPPK (183 aa)) is the tr-type G domain. GTP-binding positions include 16–21 (DHGKST) and 133–136 (NKID).

Belongs to the TRAFAC class translation factor GTPase superfamily. Classic translation factor GTPase family. LepA subfamily.

It is found in the cell inner membrane. It catalyses the reaction GTP + H2O = GDP + phosphate + H(+). In terms of biological role, required for accurate and efficient protein synthesis under certain stress conditions. May act as a fidelity factor of the translation reaction, by catalyzing a one-codon backward translocation of tRNAs on improperly translocated ribosomes. Back-translocation proceeds from a post-translocation (POST) complex to a pre-translocation (PRE) complex, thus giving elongation factor G a second chance to translocate the tRNAs correctly. Binds to ribosomes in a GTP-dependent manner. The polypeptide is Elongation factor 4 (Bdellovibrio bacteriovorus (strain ATCC 15356 / DSM 50701 / NCIMB 9529 / HD100)).